The sequence spans 955 residues: Anoctamin-4 (955 aa).

The Extracellular portion of the chain corresponds to 1-352; sequence MEASSSGITN…FGEKIGLYFA (352 aa). The segment at 72–100 is disordered; sequence CKDDDSLLHPGNLTSTSDDASRLEAGGET. 4 N-linked (GlcNAc...) asparagine glycosylation sites follow: Asn-83, Asn-105, Asn-257, and Asn-288. Residues 353–373 traverse the membrane as a helical segment; it reads WLGWYTGMLFPAAFIGLFVFL. The Cytoplasmic portion of the chain corresponds to 374–424; sequence YGVTTLDHSQVSKEVCQATDIIMCPVCDKYCPFMRLSDSCVYAKVTHLFDN. Residues 425–445 form a helical membrane-spanning segment; that stretch reads GATVFFAVFMAVWATVFLEFW. Topologically, residues 446-505 are extracellular; sequence KRRRAVIAYDWDLIDWEEEEEEIRPQFEAKYSKKERMNPISGKPEPYQAFTDKCSRLIVS. A helical transmembrane segment spans residues 506–526; sequence ASGIFFMICVVIAAVFGIVIY. Residues 527–547 lie on the Cytoplasmic side of the membrane; the sequence is RVVTVSTFAAFKWALIRNNSQ. A helical membrane pass occupies residues 548–568; it reads VATTGTAVCINFCIIMLLNVL. The Extracellular portion of the chain corresponds to 569 to 595; sequence YEKVALLLTNLEQPRTESEWENSFTLK. The chain crosses the membrane as a helical span at residues 596-616; sequence MFLFQFVNLNSSTFYIAFFLG. At 617-715 the chain is on the cytoplasmic side; sequence RFTGHPGAYL…AYGLFDEYLE (99 aa). The helical transmembrane segment at 716–736 threads the bilayer; that stretch reads MILQFGFTTIFVAAFPLAPLL. Over 737–768 the chain is Extracellular; sequence ALLNNIIEIRLDAYKFVTQWRRPLASRAKDIG. Residues 769 to 789 traverse the membrane as a helical segment; that stretch reads IWYGILEGIGILSVITNAFVI. Topologically, residues 790–885 are cytoplasmic; the sequence is AITSDFIPRL…QFWHVLAARL (96 aa). The helical transmembrane segment at 886–906 threads the bilayer; that stretch reads AFIIVFEHLVFCIKHLISYLI. Residues 907-955 lie on the Extracellular side of the membrane; it reads PDLPKDLRDRMRREKYLIQEMMYEAELERLQKERKERKKNGKAHHNEWP.

It belongs to the anoctamin family.

Its subcellular location is the cell membrane. It carries out the reaction a 1,2-diacyl-sn-glycero-3-phospho-L-serine(in) = a 1,2-diacyl-sn-glycero-3-phospho-L-serine(out). The enzyme catalyses a beta-D-galactosyl-(1&lt;-&gt;1')-N-acylsphing-4-enine(out) = a beta-D-galactosyl-(1&lt;-&gt;1')-N-acylsphing-4-enine(in). The catalysed reaction is a 1,2-diacyl-sn-glycero-3-phosphocholine(in) = a 1,2-diacyl-sn-glycero-3-phosphocholine(out). Its function is as follows. Has calcium-dependent phospholipid scramblase activity; scrambles phosphatidylserine, phosphatidylcholine and galactosylceramide. Does not exhibit calcium-activated chloride channel (CaCC) activity. In Homo sapiens (Human), this protein is Anoctamin-4 (ANO4).